The sequence spans 342 residues: Autoinducer 2 import system permease protein LsrC (342 aa).

At 1 to 13 (MLKFIQNNREITA) the chain is on the periplasmic side. Residues 14–34 (LLAVVLLFVLPGFLDRQYLSV) form a helical membrane-spanning segment. Residues 35 to 38 (QTLT) lie on the Cytoplasmic side of the membrane. The helical transmembrane segment at 39–59 (MVYSSAQILILLAMGATLVML) threads the bilayer. The Periplasmic portion of the chain corresponds to 60 to 69 (TRNIDVSVGS). Residues 70–90 (ITGMCAVLLGMLLNAGYSLPV) form a helical membrane-spanning segment. Over 91-92 (AC) the chain is Cytoplasmic. Residues 93 to 113 (VATLLLGLLAGFFNGVLVAWL) traverse the membrane as a helical segment. K114 is a topological domain (periplasmic). A helical transmembrane segment spans residues 115 to 135 (IPAIVATLGTLGLYRGIMLLW). Over 136–154 (TGGKWIEGLPAELKQLSAP) the chain is Cytoplasmic. Residues 155–175 (LLLGVSAIGWLTIILVAFMAW) form a helical membrane-spanning segment. Over 176 to 212 (LLAKTAFGRSFYATGDNLQGARQLGVRTEAIRIVAFS) the chain is Periplasmic. A helical transmembrane segment spans residues 213–233 (LNGCMAALAGIVFASQIGFIP). The Cytoplasmic segment spans residues 234–251 (NQTGTGLEMKAIAACVLG). The helical transmembrane segment at 252–272 (GISLLGGSGAIIGAVLGAWFL) threads the bilayer. At 273–283 (TQIDSVLVLLR) the chain is on the periplasmic side. Residues 284–304 (IPAWWNDFIAGLVLLAVLVFD) form a helical membrane-spanning segment. The Cytoplasmic segment spans residues 305–342 (GRLRCALERNLRRQKYARFMTPPPSVKPASSGKKREAA).

The protein belongs to the binding-protein-dependent transport system permease family. AraH/RbsC subfamily. The complex is composed of two ATP-binding proteins (LsrA), two transmembrane proteins (LsrC and LsrD) and a solute-binding protein (LsrB).

The protein resides in the cell inner membrane. Part of the ABC transporter complex LsrABCD involved in autoinducer 2 (AI-2) import. Probably responsible for the translocation of the substrate across the membrane. In Escherichia coli (strain K12 / DH10B), this protein is Autoinducer 2 import system permease protein LsrC (lsrC).